A 181-amino-acid chain; its full sequence is Inner membrane-spanning protein YciB (181 aa).

5 helical membrane-spanning segments follow: residues 10–30 (LIIF…GALI), 50–70 (MHLI…VFHD), 72–92 (AFIK…LGVS), 118–138 (VTWY…YVAF), and 148–168 (FKVF…VFYL).

Belongs to the YciB family.

It is found in the cell inner membrane. In terms of biological role, plays a role in cell envelope biogenesis, maintenance of cell envelope integrity and membrane homeostasis. The chain is Inner membrane-spanning protein YciB from Shewanella sp. (strain MR-4).